The primary structure comprises 165 residues: MTVTLNRGSITSLMSSSQAVSTLQPVASELKTQLENKLKSESAEKTREVLWQQYYASNPPDHAVLEVLAMPVREALLARFGQHQGSVVPAIDLPELRSVLQQFDSFGKRWEAILLQVLEGIKPNESQVGLPYLSELINKELMILLPSNSIVDSLLHNSHQIDMDT.

Belongs to the YopR family.

The protein localises to the secreted. In terms of biological role, may be involved in the regulation of the assembly of the type III secretion system (T3SS), also called injectisome, which is used to inject bacterial effector proteins into eukaryotic host cells. May control the secretion and/or polymerization of YscF/SctF, the principal component of the needle filament, thereby impacting the assembly of the T3SS. Involved in pathogenesis. In Yersinia pseudotuberculosis serotype I (strain IP32953), this protein is Type 3 secretion system regulator YopR.